The following is a 420-amino-acid chain: Tyrosine--tRNA ligase (420 aa).

Tyr-36 provides a ligand contact to L-tyrosine. Positions 41–50 (PTADSLHIGH) match the 'HIGH' region motif. Residues Tyr-170 and Gln-174 each coordinate L-tyrosine. The short motif at 231-235 (KFGKT) is the 'KMSKS' region element. Position 234 (Lys-234) interacts with ATP. The 68-residue stretch at 353 to 420 (RNIVEVIVET…KKKYFMVNYK (68 aa)) folds into the S4 RNA-binding domain.

This sequence belongs to the class-I aminoacyl-tRNA synthetase family. TyrS type 1 subfamily. In terms of assembly, homodimer.

The protein localises to the cytoplasm. The catalysed reaction is tRNA(Tyr) + L-tyrosine + ATP = L-tyrosyl-tRNA(Tyr) + AMP + diphosphate + H(+). Its function is as follows. Catalyzes the attachment of tyrosine to tRNA(Tyr) in a two-step reaction: tyrosine is first activated by ATP to form Tyr-AMP and then transferred to the acceptor end of tRNA(Tyr). The polypeptide is Tyrosine--tRNA ligase (Staphylococcus saprophyticus subsp. saprophyticus (strain ATCC 15305 / DSM 20229 / NCIMB 8711 / NCTC 7292 / S-41)).